The primary structure comprises 607 residues: ATP-dependent DNA helicase II subunit 1 (607 aa).

The Ku domain maps to 241–452 (MDLGNDVRIG…IETMQRILRG (212 aa)). The region spanning 570–604 (IKALKVSQLKDILRDRGLRVSGKKADLLDNLTNYV) is the SAP domain.

This sequence belongs to the ku70 family. In terms of assembly, heterodimer of pku70 and pku80.

Its subcellular location is the nucleus. It is found in the chromosome. It localises to the telomere. It catalyses the reaction ATP + H2O = ADP + phosphate + H(+). Functionally, single-stranded DNA-dependent ATP-dependent helicase. Involved in non-homologous end joining (NHEJ) DNA double strand break repair. DNA-binding is sequence-independent but has a high affinity to nicks in double-stranded DNA and to the ends of duplex DNA. Binds to naturally occurring chromosomal ends, and therefore provides chromosomal end protection. Required also for telomere recombination to repair telomeric ends in the absence of telomerase. ku70, of the ku70/ku80 heterodimer, binds to the stem loop of tlc1, the RNA component of telomerase. Required for mating-type switching. Involved in telomere maintenance. Interacts with telomeric repeats and subtelomeric sequences thereby controlling telomere length and protecting against subtelomeric rearrangement. Maintains telomeric chromatin, which is involved in silencing the expression of genes located at the telomere. In Schizosaccharomyces pombe (strain 972 / ATCC 24843) (Fission yeast), this protein is ATP-dependent DNA helicase II subunit 1 (pku70).